The following is a 174-amino-acid chain: Large ribosomal subunit protein uL18 (174 aa).

This sequence belongs to the universal ribosomal protein uL18 family. As to quaternary structure, part of the 50S ribosomal subunit. Contacts the 5S and 23S rRNAs.

This is one of the proteins that bind and probably mediate the attachment of the 5S RNA into the large ribosomal subunit, where it forms part of the central protuberance. The polypeptide is Large ribosomal subunit protein uL18 (Methanosarcina acetivorans (strain ATCC 35395 / DSM 2834 / JCM 12185 / C2A)).